A 384-amino-acid chain; its full sequence is Carbamoyl phosphate synthase small chain (384 aa).

A CPSase region spans residues 1–193 (MTKPATTPAI…DSHPEIPASE (193 aa)). 3 residues coordinate L-glutamine: Ser51, Gly245, and Gly247. The 188-residue stretch at 197 to 384 (HVVAYDYGVK…ISAMAPVVDR (188 aa)) folds into the Glutamine amidotransferase type-1 domain. Cys273 serves as the catalytic Nucleophile. 5 residues coordinate L-glutamine: Leu274, Gln277, Asn315, Gly317, and Phe318. Residues His357 and Glu359 contribute to the active site.

This sequence belongs to the CarA family. Composed of two chains; the small (or glutamine) chain promotes the hydrolysis of glutamine to ammonia, which is used by the large (or ammonia) chain to synthesize carbamoyl phosphate. Tetramer of heterodimers (alpha,beta)4.

It catalyses the reaction hydrogencarbonate + L-glutamine + 2 ATP + H2O = carbamoyl phosphate + L-glutamate + 2 ADP + phosphate + 2 H(+). The catalysed reaction is L-glutamine + H2O = L-glutamate + NH4(+). It participates in amino-acid biosynthesis; L-arginine biosynthesis; carbamoyl phosphate from bicarbonate: step 1/1. The protein operates within pyrimidine metabolism; UMP biosynthesis via de novo pathway; (S)-dihydroorotate from bicarbonate: step 1/3. In terms of biological role, small subunit of the glutamine-dependent carbamoyl phosphate synthetase (CPSase). CPSase catalyzes the formation of carbamoyl phosphate from the ammonia moiety of glutamine, carbonate, and phosphate donated by ATP, constituting the first step of 2 biosynthetic pathways, one leading to arginine and/or urea and the other to pyrimidine nucleotides. The small subunit (glutamine amidotransferase) binds and cleaves glutamine to supply the large subunit with the substrate ammonia. In Stutzerimonas stutzeri (Pseudomonas stutzeri), this protein is Carbamoyl phosphate synthase small chain.